Reading from the N-terminus, the 718-residue chain is Sec-independent protein translocase protein TatCt (718 aa).

The next 8 membrane-spanning stretches (helical) occupy residues 34–54 (VFIVFLVGFLGTFYALRLYVW), 84–104 (ILLQAKIGLVVGVLFALPPFI), 137–157 (LFAAGVAYGYFVFFPFTFAFL), 178–198 (FIFLLTLSFGLASQLPLAMTG), 214–231 (WRHAIVGIFAFGALFTPP), 234–254 (FTQIMWAVPVILLYAFSLYLA), 280–300 (LAGVGVVVGLLVYAFYEYGGV), and 325–345 (LGAFVVAGGFVGLAFGLAYLV). Residues 421-451 (REAEAADAEDEPGELEDRTTRAGGAFVSELT) form a disordered region. The span at 425-434 (AADAEDEPGE) shows a compositional bias: acidic residues. The next 6 helical transmembrane spans lie at 478–498 (AFWVVGWFMLVLATTFGWLYT), 539–559 (FSTILAVLATLPLVAYFVWPA), 572–592 (TVFVWTGALAGGLLGGFALGY), 621–641 (FFWLIFFTTAGIGLLADVPIL), 661–681 (EVTVFILAISAVFTPASITTM), and 682–702 (FMVTLPLMAAYGVGLGVLFVL).

This sequence belongs to the TatC family. As to quaternary structure, forms a complex with TatA.

It is found in the cell membrane. Part of the twin-arginine translocation (Tat) system that transports large folded proteins containing a characteristic twin-arginine motif in their signal peptide across membranes. The polypeptide is Sec-independent protein translocase protein TatCt (Haloferax volcanii (strain ATCC 29605 / DSM 3757 / JCM 8879 / NBRC 14742 / NCIMB 2012 / VKM B-1768 / DS2) (Halobacterium volcanii)).